Consider the following 288-residue polypeptide: Cytochrome b-c1 complex catalytic subunit, mitochondrial (288 aa).

Residues 12-34 traverse the membrane as a helical segment; it reads SMVQKFIAGGVGVTGLTASYLLY. Residues 69–222 enclose the Cytochrome c domain; sequence ASIRRGFQVY…DLVEYEDGTP (154 aa). Residues Cys82, Cys85, and His86 each coordinate heme c. Acidic residues predominate over residues 111 to 121; that stretch reads EELEYDDEPDD. The segment at 111–138 is disordered; it reads EELEYDDEPDDEGKPRKRPGKLADYIPG. A helical transmembrane segment spans residues 250–268; it reads WGLKALVVLSSLYLLSIWV.

Belongs to the cytochrome c family. As to quaternary structure, component of the ubiquinol-cytochrome c oxidoreductase (cytochrome b-c1 complex, complex III, CIII), a multisubunit enzyme composed of 10 subunits. The complex is composed of 3 respiratory subunits cytochrome b (COB), cytochrome c1 (CYT1) and Rieske protein (RIP1), 2 core protein subunits COR1 and QCR2, and 5 low-molecular weight protein subunits QCR6, QCR7, QCR8, QCR9 and QCR10. The complex exists as an obligatory dimer and forms supercomplexes (SCs) in the inner mitochondrial membrane with a monomer or a dimer of cytochrome c oxidase (complex IV, CIV), resulting in 2 different assemblies (supercomplexes III(2)IV and III(2)IV(2)). It depends on heme c as a cofactor.

It is found in the mitochondrion inner membrane. It carries out the reaction a quinol + 2 Fe(III)-[cytochrome c](out) = a quinone + 2 Fe(II)-[cytochrome c](out) + 2 H(+)(out). In terms of biological role, component of the ubiquinol-cytochrome c oxidoreductase, a multisubunit transmembrane complex that is part of the mitochondrial electron transport chain which drives oxidative phosphorylation. The complex plays an important role in the uptake of multiple carbon sources present in different host niches. The chain is Cytochrome b-c1 complex catalytic subunit, mitochondrial from Candida albicans (strain SC5314 / ATCC MYA-2876) (Yeast).